Reading from the N-terminus, the 130-residue chain is Small ribosomal subunit protein bS6 (130 aa).

The tract at residues 100 to 130 is disordered; it reads SPMVKAKDERRERREDFAEAGDDVEAGDSEE. Residues 104–116 are compositionally biased toward basic and acidic residues; that stretch reads KAKDERRERREDF. Residues 117–130 show a composition bias toward acidic residues; sequence AEAGDDVEAGDSEE.

Belongs to the bacterial ribosomal protein bS6 family.

Its function is as follows. Binds together with bS18 to 16S ribosomal RNA. This chain is Small ribosomal subunit protein bS6, found in Pectobacterium atrosepticum (strain SCRI 1043 / ATCC BAA-672) (Erwinia carotovora subsp. atroseptica).